Here is a 134-residue protein sequence, read N- to C-terminus: MIEVGEYKVKEGLYYTKDHEWAKVLDDGTVLVGITDYAQKELGDLAYVELPEVGKEVNKGDVLCEIESVKAVSEVYAPVSGEVIEVNEALEDSPELLNEDPYENWIAKLKPSNLDEELKELMDAEAYAKYLESL.

Residues 29 to 110 (TVLVGITDYA…PYENWIAKLK (82 aa)) enclose the Lipoyl-binding domain. An N6-lipoyllysine modification is found at K70.

This sequence belongs to the GcvH family. In terms of assembly, the glycine cleavage system is composed of four proteins: P, T, L and H. It depends on (R)-lipoate as a cofactor.

In terms of biological role, the glycine cleavage system catalyzes the degradation of glycine. The H protein shuttles the methylamine group of glycine from the P protein to the T protein. The sequence is that of Probable glycine cleavage system H protein from Thermococcus gammatolerans (strain DSM 15229 / JCM 11827 / EJ3).